The following is an 835-amino-acid chain: Leucine--tRNA ligase (835 aa).

The 'HIGH' region motif lies at 36 to 46 (PYPSGKIHVGH). Residues 602–606 (KMSKS) carry the 'KMSKS' region motif. Residue Lys605 coordinates ATP.

It belongs to the class-I aminoacyl-tRNA synthetase family.

The protein resides in the cytoplasm. The catalysed reaction is tRNA(Leu) + L-leucine + ATP = L-leucyl-tRNA(Leu) + AMP + diphosphate. The chain is Leucine--tRNA ligase from Rickettsia rickettsii (strain Iowa).